We begin with the raw amino-acid sequence, 252 residues long: Type III pantothenate kinase (252 aa).

ATP is bound at residue 6–13 (DIGNTTTE). Residues Tyr-100 and 107 to 110 (GADR) contribute to the substrate site. Asp-109 acts as the Proton acceptor in catalysis. Asp-129 is a binding site for K(+). Residue Thr-132 coordinates ATP. Thr-184 contributes to the substrate binding site.

Belongs to the type III pantothenate kinase family. Homodimer. Requires NH4(+) as cofactor. The cofactor is K(+).

Its subcellular location is the cytoplasm. It carries out the reaction (R)-pantothenate + ATP = (R)-4'-phosphopantothenate + ADP + H(+). It participates in cofactor biosynthesis; coenzyme A biosynthesis; CoA from (R)-pantothenate: step 1/5. In terms of biological role, catalyzes the phosphorylation of pantothenate (Pan), the first step in CoA biosynthesis. The chain is Type III pantothenate kinase from Sulfurihydrogenibium sp. (strain YO3AOP1).